We begin with the raw amino-acid sequence, 620 residues long: MALLQIAEPGQSAAPHQHRLAVGIDLGTTNSLVAAVRSGVANTLPDDKSHHSLPSVVRYTQEGVEVGVDAEANSAKDPQNTIISVKRFMGRSLSDIRSGVQDLPYQLETSENGLPVFVTEQGKVNPIQVSAEILKPLVSRAEKTLGGELEGVVITVPAYFDDAQRQGTKDAAGLLGVKVLRLLNEPTAAAIAYGLDSGQEGVIAIYDLGGGTFDISILRLHKGVFEVLATGGDSALGGDDFDHLLYQHLLNQWQLASPSATLSRRLLIESRRVKEALTDNIQVTASIKLDDGTELTHDVAKATFDDLISSLVKKTVSSCRRALRDAGVTNDEVLETVMVGGSTRVPLVRELVDKFFGKEPLTSIDPDRVVAIGAAIQADILVGNKPESDLLLLDVLPLSLGIETMGGLVEKIVSRNTTIPVAKAQEFTTFKDGQTAMAFHVVQGERELVDDCRSLARFTLKGIPPLAAGAAHIRVTFQVDADGLLSVTAMEKSTGVQSSIQVKPSFGLTDEEIGTMLKDSMANAKEDITRRMLAEQKVEAARVLETLSAALQKDAVLLTESERSDIEQAMASLAQISSQDDADAIEKAIEALDASTQDFAAKRMDNSIKLALKGQSVDSI.

Belongs to the heat shock protein 70 family.

Chaperone involved in the maturation of iron-sulfur cluster-containing proteins. Has a low intrinsic ATPase activity which is markedly stimulated by HscB. The sequence is that of Chaperone protein HscA homolog from Shewanella woodyi (strain ATCC 51908 / MS32).